A 25-amino-acid polypeptide reads, in one-letter code: Inorganic pyrophosphatase (25 aa).

In terms of assembly, monomer. It depends on Mg(2+) as a cofactor.

The catalysed reaction is diphosphate + H2O = 2 phosphate + H(+). This chain is Inorganic pyrophosphatase, found in Cyanophora paradoxa.